Consider the following 307-residue polypeptide: Homoserine kinase (307 aa).

Residue P95 to S105 coordinates ATP.

Belongs to the GHMP kinase family. Homoserine kinase subfamily.

It localises to the cytoplasm. The enzyme catalyses L-homoserine + ATP = O-phospho-L-homoserine + ADP + H(+). It participates in amino-acid biosynthesis; L-threonine biosynthesis; L-threonine from L-aspartate: step 4/5. Functionally, catalyzes the ATP-dependent phosphorylation of L-homoserine to L-homoserine phosphate. This is Homoserine kinase from Corynebacterium aurimucosum (strain ATCC 700975 / DSM 44827 / CIP 107346 / CN-1) (Corynebacterium nigricans).